We begin with the raw amino-acid sequence, 246 residues long: Small ribosomal subunit protein uS2 (246 aa).

It belongs to the universal ribosomal protein uS2 family.

The protein is Small ribosomal subunit protein uS2 of Pseudomonas paraeruginosa (strain DSM 24068 / PA7) (Pseudomonas aeruginosa (strain PA7)).